The chain runs to 156 residues: Small ribosomal subunit protein uS7 (156 aa).

This sequence belongs to the universal ribosomal protein uS7 family. In terms of assembly, part of the 30S ribosomal subunit. Contacts proteins S9 and S11.

In terms of biological role, one of the primary rRNA binding proteins, it binds directly to 16S rRNA where it nucleates assembly of the head domain of the 30S subunit. Is located at the subunit interface close to the decoding center, probably blocks exit of the E-site tRNA. The chain is Small ribosomal subunit protein uS7 from Shewanella halifaxensis (strain HAW-EB4).